A 329-amino-acid polypeptide reads, in one-letter code: Intradiol ring-cleavage dioxygenase hqdA (329 aa).

4 residues coordinate Fe cation: Tyr167, Tyr201, His225, and His227.

This sequence belongs to the intradiol ring-cleavage dioxygenase family. As to quaternary structure, homodimer. Requires Fe(3+) as cofactor.

The catalysed reaction is catechol + O2 = cis,cis-muconate + 2 H(+). The enzyme catalyses benzene-1,2,4-triol + O2 = maleylacetate + 2 H(+). Its function is as follows. Intradiol ring-cleavage dioxygenase involved in an alternative pathway to the protocatechuic acid pathway since it is active on hydroxyquinol and catechol but not on protocatechuic acid. The protein is Intradiol ring-cleavage dioxygenase hqdA of Aspergillus niger (strain ATCC MYA-4892 / CBS 513.88 / FGSC A1513).